We begin with the raw amino-acid sequence, 161 residues long: Probable ubiquitin-conjugating enzyme E2 16 (161 aa).

The region spanning 15-161 (IATNRLQKEL…TRWWFHDDKV (147 aa)) is the UBC core domain. The active-site Glycyl thioester intermediate is C99.

Belongs to the ubiquitin-conjugating enzyme family.

It catalyses the reaction S-ubiquitinyl-[E1 ubiquitin-activating enzyme]-L-cysteine + [E2 ubiquitin-conjugating enzyme]-L-cysteine = [E1 ubiquitin-activating enzyme]-L-cysteine + S-ubiquitinyl-[E2 ubiquitin-conjugating enzyme]-L-cysteine.. It participates in protein modification; protein ubiquitination. Its function is as follows. Accepts the ubiquitin from the E1 complex and catalyzes its covalent attachment to other proteins. The chain is Probable ubiquitin-conjugating enzyme E2 16 (UBC16) from Arabidopsis thaliana (Mouse-ear cress).